The primary structure comprises 622 residues: Golgin subfamily A member 6-like protein 7 (622 aa).

Disordered stretches follow at residues 1–82 (MMSE…QQAL), 251–496 (RKHE…RKQV), and 511–580 (EKMQ…HDNR). Basic and acidic residues-rich tracts occupy residues 57–74 (SPED…ENKA), 251–275 (RKHE…REQE), 283–332 (EQMR…KQEE), 339–367 (EQMR…KQEE), 374–388 (EQMR…KQEE), and 395–420 (EQMR…KQEE). A coiled-coil region spans residues 100–534 (KTELETALHD…EKRREKKERM (435 aa)). A compositionally biased stretch (acidic residues) spans 477–489 (QMGEQEEQMGEQE). Composition is skewed to basic and acidic residues over residues 511 to 546 (EKMQ…ERCS) and 567 to 580 (PARE…HDNR).

This sequence belongs to the GOLGA6 family.

The protein is Golgin subfamily A member 6-like protein 7 of Homo sapiens (Human).